The sequence spans 170 residues: Regulator of ribonuclease activity A (170 aa).

It belongs to the RraA family. In terms of assembly, homotrimer. Binds to both RNA-binding sites in the C-terminal region of Rne and to RhlB.

It is found in the cytoplasm. Globally modulates RNA abundance by binding to RNase E (Rne) and regulating its endonucleolytic activity. Can modulate Rne action in a substrate-dependent manner by altering the composition of the degradosome. Modulates RNA-binding and helicase activities of the degradosome. This chain is Regulator of ribonuclease activity A, found in Psychromonas ingrahamii (strain DSM 17664 / CCUG 51855 / 37).